A 500-amino-acid polypeptide reads, in one-letter code: Na(+)/H(+) antiporter NhaB (500 aa).

A run of 12 helical transmembrane segments spans residues 28–50 (FLML…LLVI), 58–78 (MALK…ALLL), 96–116 (VILL…LLLF), 129–149 (ALLA…LDAL), 150–170 (TVTA…HRVA), 205–225 (LLMH…VGEP), 241–261 (FFLK…VTCL), 311–331 (ILIA…LMVI), 350–370 (FKDA…VAVI), 394–414 (MLFI…VATI), 449–469 (VATP…IAPL), and 477–497 (MVWM…YAVS).

Belongs to the NhaB Na(+)/H(+) (TC 2.A.34) antiporter family.

It localises to the cell inner membrane. The catalysed reaction is 2 Na(+)(in) + 3 H(+)(out) = 2 Na(+)(out) + 3 H(+)(in). Functionally, na(+)/H(+) antiporter that extrudes sodium in exchange for external protons. This is Na(+)/H(+) antiporter NhaB from Pseudomonas fluorescens (strain Pf0-1).